Here is a 1293-residue protein sequence, read N- to C-terminus: DNA repair protein complementing XP-C cells homolog (1293 aa).

5 disordered regions span residues 1 to 199 (MSDE…FEDK), 217 to 239 (ERTRDALSKRNVTATPPRSQAAT), 255 to 341 (QSVE…NISG), 514 to 640 (DLIP…SKCL), and 658 to 919 (LSSK…EPAK). Residues 18 to 30 (DEWKPSKDVKGGE) show a composition bias toward basic and acidic residues. Phosphoserine is present on residues S31, S32, and S37. Over residues 31 to 43 (SSDDDDSDFDELQ) the composition is skewed to acidic residues. Over residues 51–60 (SSGRSSAVAG) the composition is skewed to low complexity. Composition is skewed to polar residues over residues 101 to 130 (FPTSPSQQKENTPRASGSKNAKTPNESGAR) and 226 to 238 (RNVTATPPRSQAA). The segment covering 288-301 (SKTKSTRIKRHTKT) has biased composition (basic residues). The span at 313–335 (DTDDSDFEEVADADLSSDQDDGE) shows a compositional bias: acidic residues. Residues 520–578 (LRPDDKNKSQTVESERESEDEKPKKDKKAGKPAEKESSKSTISKEAEKKNNAKKAEAKP) show a composition bias toward basic and acidic residues. Phosphoserine occurs at positions 533 and 537. The segment covering 580–594 (SKSTTKGSETTKSGT) has biased composition (low complexity). A compositionally biased stretch (basic and acidic residues) spans 598–612 (VKKELSLSSKLVEKS). A compositionally biased stretch (low complexity) spans 658–692 (LSSKLVLKSKNQSSFSSNKSDTSFEENPSTSSSSK). The segment covering 693–711 (SLKEETAKLSSSKLEDKKV) has biased composition (basic and acidic residues). Residues 720-737 (KVQSSLLKRVTTQNISES) show a composition bias toward polar residues. Residues 806–818 (HLQEQRNTRETRS) are compositionally biased toward basic and acidic residues. 2 positions are modified to phosphoserine: S908 and S911. 3 short sequence motifs (nuclear localization signal) span residues 922 to 938 (KKAPVLPKSVQNLRKDR), 1195 to 1211 (KKTVHLRLPGLMRICKK), and 1275 to 1291 (KKLIKGLLIRERLKKKY).

It belongs to the XPC family. As to quaternary structure, heterodimer.

The protein localises to the nucleus. Functionally, involved in DNA excision repair. May play a part in DNA damage recognition and/or in altering chromatin structure to allow access by damage-processing enzymes. Involved in nucleotide excision repair of DNA damaged with UV light, bulky adducts, or cross-linking agents. This chain is DNA repair protein complementing XP-C cells homolog, found in Drosophila melanogaster (Fruit fly).